Here is a 498-residue protein sequence, read N- to C-terminus: ATP synthase subunit beta, chloroplastic (498 aa).

Position 172–179 (172–179 (GGAGVGKT)) interacts with ATP.

The protein belongs to the ATPase alpha/beta chains family. In terms of assembly, F-type ATPases have 2 components, CF(1) - the catalytic core - and CF(0) - the membrane proton channel. CF(1) has five subunits: alpha(3), beta(3), gamma(1), delta(1), epsilon(1). CF(0) has four main subunits: a(1), b(1), b'(1) and c(9-12).

It localises to the plastid. It is found in the chloroplast thylakoid membrane. It catalyses the reaction ATP + H2O + 4 H(+)(in) = ADP + phosphate + 5 H(+)(out). In terms of biological role, produces ATP from ADP in the presence of a proton gradient across the membrane. The catalytic sites are hosted primarily by the beta subunits. The polypeptide is ATP synthase subunit beta, chloroplastic (Canella winterana (Wild cinnamon)).